The following is a 498-amino-acid chain: Peptidase inhibitor 16 (498 aa).

A signal peptide spans 1–29; it reads MHGSCSPWVMLPPPLLLLLLLIATGPTTA. The SCP domain occupies 39–167; sequence VDLHNQYRAQ…ANIHLLVCNY (129 aa). A glycan (N-linked (GlcNAc...) asparagine) is linked at Asn116. 3 disordered regions span residues 204-277, 317-407, and 419-467; these read NPEK…GPSS, PKSM…SPLS, and ERGG…ENPE. Polar residues-rich tracts occupy residues 218–277 and 344–353; these read VPST…GPSS and LTESGESVPQ. Residues 367–380 are compositionally biased toward low complexity; it reads PEAILPEAEAAPTE. Over residues 383–397 the composition is skewed to basic and acidic residues; that stretch reads VELREPEAESPKAES. Over residues 437–447 the composition is skewed to polar residues; it reads SLPTFPSASGN. Asn447 carries N-linked (GlcNAc...) asparagine glycosylation.

It belongs to the CRISP family. As to quaternary structure, interacts with PSP94/MSMB. In terms of processing, N-glycosylated. As to expression, expressed strongly in aorta and skin, and weakly in adipose tissue (at protein level). In heart, found in the extracellular space surrounding cardiomyocytes (at protein level).

It localises to the secreted. Functionally, may inhibit cardiomyocyte growth. The protein is Peptidase inhibitor 16 (Pi16) of Mus musculus (Mouse).